A 1174-amino-acid polypeptide reads, in one-letter code: Probable pyruvate-flavodoxin oxidoreductase (1174 aa).

4Fe-4S ferredoxin-type domains follow at residues 680–709 and 736–765; these read EIPI…AKVV and YVLQ…NPEI. The [4Fe-4S] cluster site is built by Cys689, Cys692, Cys695, Cys699, Cys745, Cys748, Cys751, Cys755, Cys819, Cys822, Cys847, and Cys1071.

It belongs to the pyruvate:ferredoxin/flavodoxin oxidoreductase family. [4Fe-4S] cluster serves as cofactor.

It carries out the reaction oxidized [flavodoxin] + pyruvate + CoA + 2 H(+) = reduced [flavodoxin] + acetyl-CoA + CO2. In terms of biological role, oxidoreductase required for the transfer of electrons from pyruvate to flavodoxin. The sequence is that of Probable pyruvate-flavodoxin oxidoreductase (ydbK) from Escherichia coli (strain K12).